A 97-amino-acid chain; its full sequence is Small nuclear ribonucleoprotein Sm D3 (97 aa).

One can recognise a Sm domain in the interval L3–L75.

This sequence belongs to the snRNP core protein family. Belongs to the 40S cdc5-associated complex (or cwf complex), a spliceosome sub-complex reminiscent of a late-stage spliceosome composed of the U2, U5 and U6 snRNAs and at least brr2, cdc5, cwf2/prp3, cwf3/syf1, cwf4/syf3, cwf5/ecm2, spp42/cwf6, cwf7/spf27, cwf8, cwf9, cwf10, cwf11, cwf12, prp45/cwf13, cwf14, cwf15, cwf16, cwf17, cwf18, cwf19, cwf20, cwf21, cwf22, cwf23, cwf24, cwf25, cwf26, cyp7/cwf27, cwf28, cwf29/ist3, lea1, msl1, prp5/cwf1, prp10, prp12/sap130, prp17, prp22, sap61, sap62, sap114, sap145, slu7, smb1, smd1, smd3, smf1, smg1 and syf2. Interacts with saf5; the interaction is direct.

The protein localises to the nucleus. It is found in the cytoplasm. It localises to the cytosol. Its function is as follows. Plays a role in pre-mRNA splicing as a core component of the spliceosomal U1, U2, U4 and U5 small nuclear ribonucleoproteins (snRNPs), the building blocks of the spliceosome. This Schizosaccharomyces pombe (strain 972 / ATCC 24843) (Fission yeast) protein is Small nuclear ribonucleoprotein Sm D3 (smd3).